A 221-amino-acid chain; its full sequence is Thiamine-phosphate synthase (221 aa).

Residues 44–48 and Asn-79 each bind 4-amino-2-methyl-5-(diphosphooxymethyl)pyrimidine; that span reads QFREK. Mg(2+) is bound by residues Asp-80 and Asp-99. Ser-117 contacts 4-amino-2-methyl-5-(diphosphooxymethyl)pyrimidine. 143–145 serves as a coordination point for 2-[(2R,5Z)-2-carboxy-4-methylthiazol-5(2H)-ylidene]ethyl phosphate; that stretch reads TSS. Lys-146 is a 4-amino-2-methyl-5-(diphosphooxymethyl)pyrimidine binding site. Residues Gly-175 and 195-196 each bind 2-[(2R,5Z)-2-carboxy-4-methylthiazol-5(2H)-ylidene]ethyl phosphate; that span reads IS.

It belongs to the thiamine-phosphate synthase family. It depends on Mg(2+) as a cofactor.

It carries out the reaction 2-[(2R,5Z)-2-carboxy-4-methylthiazol-5(2H)-ylidene]ethyl phosphate + 4-amino-2-methyl-5-(diphosphooxymethyl)pyrimidine + 2 H(+) = thiamine phosphate + CO2 + diphosphate. The catalysed reaction is 2-(2-carboxy-4-methylthiazol-5-yl)ethyl phosphate + 4-amino-2-methyl-5-(diphosphooxymethyl)pyrimidine + 2 H(+) = thiamine phosphate + CO2 + diphosphate. It catalyses the reaction 4-methyl-5-(2-phosphooxyethyl)-thiazole + 4-amino-2-methyl-5-(diphosphooxymethyl)pyrimidine + H(+) = thiamine phosphate + diphosphate. The protein operates within cofactor biosynthesis; thiamine diphosphate biosynthesis; thiamine phosphate from 4-amino-2-methyl-5-diphosphomethylpyrimidine and 4-methyl-5-(2-phosphoethyl)-thiazole: step 1/1. In terms of biological role, condenses 4-methyl-5-(beta-hydroxyethyl)thiazole monophosphate (THZ-P) and 2-methyl-4-amino-5-hydroxymethyl pyrimidine pyrophosphate (HMP-PP) to form thiamine monophosphate (TMP). This is Thiamine-phosphate synthase from Geobacillus kaustophilus (strain HTA426).